Reading from the N-terminus, the 690-residue chain is Calpain-9 (690 aa).

Residues 1 to 24 (MPYLHRSLRPQPQPVPRDARTVHS) form a disordered region. The 296-residue stretch at 42–337 (LFEDADFPAS…FDKVEICNLT (296 aa)) folds into the Calpain catalytic domain. Positions 81, 83, and 88 each coordinate Ca(2+). The active site involves cysteine 97. Residue glutamate 167 coordinates Ca(2+). Active-site residues include histidine 254 and asparagine 278. Ca(2+) is bound by residues glutamate 284, aspartate 291, leucine 312, aspartate 314, and glutamate 316. Residues 338–521 (PDALEDNTLH…PQEEETEEER (184 aa)) are domain III. The interval 522-690 (QFRALFRRIA…NEFINLTMNI (169 aa)) is domain IV. EF-hand domains lie at 534 to 552 (DMEV…VLQK), 561 to 589 (LSLL…FRVF), and 591 to 626 (DKLR…AGFQ). Aspartate 574, serine 576, asparagine 578, lysine 580, glutamate 585, aspartate 604, aspartate 606, serine 608, threonine 610, and glutamate 615 together coordinate Ca(2+).

The protein belongs to the peptidase C2 family. In terms of tissue distribution, predominantly expressed in stomach and small intestine, although low levels of expression in other organs.

Calcium-regulated non-lysosomal thiol-protease. The sequence is that of Calpain-9 (Capn9) from Rattus norvegicus (Rat).